A 421-amino-acid polypeptide reads, in one-letter code: Subtilisin-like protease 2 (421 aa).

An N-terminal signal peptide occupies residues 1–16; that stretch reads MQLLNFGLLLLPFVAG. The propeptide occupies 17 to 122; that stretch reads DLAPQPEPLL…VHPDQHVYLA (106 aa). Positions 36 to 122 constitute an Inhibitor I9 domain; that stretch reads QYIVTLKEGL…VHPDQHVYLA (87 aa). Residues 131-421 enclose the Peptidase S8 domain; that stretch reads RWGLGYMSSK…ERKFTLPKYF (291 aa). Active-site charge relay system residues include aspartate 169 and histidine 201. Residues asparagine 248, asparagine 261, and asparagine 348 are each glycosylated (N-linked (GlcNAc...) asparagine). The Charge relay system role is filled by serine 357. Asparagine 388 is a glycosylation site (N-linked (GlcNAc...) asparagine).

The protein belongs to the peptidase S8 family.

It is found in the secreted. Its function is as follows. Secreted subtilisin-like serine protease with keratinolytic activity that contributes to pathogenicity. This is Subtilisin-like protease 2 (SUB2) from Trichophyton equinum (Horse ringworm fungus).